Reading from the N-terminus, the 609-residue chain is Arginine--tRNA ligase (609 aa).

A 'HIGH' region motif is present at residues 132 to 142 (ANPTSSLHVGH).

Belongs to the class-I aminoacyl-tRNA synthetase family. Monomer.

It is found in the cytoplasm. It catalyses the reaction tRNA(Arg) + L-arginine + ATP = L-arginyl-tRNA(Arg) + AMP + diphosphate. This Psychrobacter arcticus (strain DSM 17307 / VKM B-2377 / 273-4) protein is Arginine--tRNA ligase.